Reading from the N-terminus, the 241-residue chain is Acyl-protein thioesterase 1 (241 aa).

Residues serine 122, aspartate 178, and histidine 211 each act as charge relay system in the active site.

Belongs to the AB hydrolase superfamily. AB hydrolase 2 family.

Its subcellular location is the cytoplasm. The protein localises to the nucleus. It carries out the reaction S-hexadecanoyl-L-cysteinyl-[protein] + H2O = L-cysteinyl-[protein] + hexadecanoate + H(+). Its function is as follows. Hydrolyzes fatty acids from S-acylated cysteine residues in proteins with a strong preference for palmitoylated G-alpha proteins over other acyl substrates. Mediates the deacylation of G-alpha proteins such as GPA1 in vivo, but has weak or no activity toward palmitoylated Ras proteins. Has weak lysophospholipase activity in vitro; however such activity may not exist in vivo. In Aspergillus fumigatus (strain ATCC MYA-4609 / CBS 101355 / FGSC A1100 / Af293) (Neosartorya fumigata), this protein is Acyl-protein thioesterase 1.